A 298-amino-acid polypeptide reads, in one-letter code: 3-sulfolactaldehyde reductase (298 aa).

NAD(+) is bound by residues 11–12 (QM), D31, L65, and T96. R123 provides a ligand contact to 2,3-dihydroxypropane-1-sulfonate. K171 is a catalytic residue. 2,3-dihydroxypropane-1-sulfonate is bound at residue 174–178 (NNYMS). Residue K240 coordinates NAD(+).

This sequence belongs to the HIBADH-related family. 3-sulfolactaldehyde reductase subfamily. As to quaternary structure, homotetramer. Dimer of dimers.

It carries out the reaction (2S)-3-sulfopropanediol + NAD(+) = (2S)-3-sulfolactaldehyde + NADH + H(+). It catalyses the reaction 4-hydroxybutanoate + NAD(+) = succinate semialdehyde + NADH + H(+). Inhibited by the NADH analogs tetrahydro-NADH and hexahydro-NADH. Reduces 3-sulfolactaldehyde (SLA) to 2,3-dihydroxypropane 1-sulfonate (DHPS). Metabolite profiling studies showed that the enzyme also catalyzes in vitro the NADH-dependent reduction of succinic semialdehyde (SSA) to 4-hydroxybutyrate (GHB), and that it could be involved in the metabolism of SSA, and other potentially toxic intermediates that may accumulate under stress conditions. However, the enzyme exhibits a 42,000-fold greater catalytic efficiency for the reduction of SLA over SSA. Shows no detectable activity on the analogous glycolytic intermediate glyceraldehyde-3-phosphate. This Escherichia coli (strain K12) protein is 3-sulfolactaldehyde reductase (yihU).